The sequence spans 397 residues: Acylalkylpyrone synthase csyB (397 aa).

Residues K50 and 50–57 (KMLEINRK) each bind CoA. Catalysis depends on C155, which acts as the Nucleophile. Residue 214–215 (GD) coordinates substrate. Residues I267, G312, 312–315 (GGYA), Y314, and A315 contribute to the CoA site. The active site involves H377.

This sequence belongs to the thiolase-like superfamily. Chalcone/stilbene synthases family. As to quaternary structure, homodimer.

In terms of biological role, acylalkylpyrone synthase that catalyzes not only the polyketide chain elongation but also the one-pot condensation of two beta-ketoacyl units to produce the 3-acyl-4-hydroxy-6-alkyl-alpha-pyrone (AcAP) scaffold, a precursor of csypyrone B. The enzyme reaction is initiated by the loading of acetoacetyl-CoA onto Cys-155, and subsequent thioester bond cleavage by the nucleophilic water generates the beta-keto acid intermediate, which is placed within a pocket. The second beta-ketoacyl unit is then produced by polyketide chain elongation of fatty acyl-CoA with one molecule of malonyl-CoA, and the condensation with the beta-ketoacid generates the final products. Csypyrone B1 is the major product and contains a propanoic acid side-chain, whereas csypyrones B2 and B3 are minor compounds that contain butyric or pentanoic acid side-chains, respectively. The protein is Acylalkylpyrone synthase csyB of Aspergillus oryzae (strain ATCC 42149 / RIB 40) (Yellow koji mold).